Consider the following 131-residue polypeptide: Profilin-1 (131 aa).

Belongs to the profilin family. Occurs in many kinds of cells as a complex with monomeric actin in a 1:1 ratio.

It localises to the cytoplasm. The protein localises to the cytoskeleton. Functionally, binds to actin and affects the structure of the cytoskeleton. At high concentrations, profilin prevents the polymerization of actin, whereas it enhances it at low concentrations. By binding to PIP2, it inhibits the formation of IP3 and DG. This chain is Profilin-1, found in Malus domestica (Apple).